The following is a 339-amino-acid chain: Phytoene synthase (339 aa).

This sequence belongs to the phytoene/squalene synthase family. Requires ATP as cofactor. Mn(2+) is required as a cofactor. It depends on Mg(2+) as a cofactor.

The protein operates within carotenoid biosynthesis; phytoene biosynthesis. Its function is as follows. Involved in the biosynthesis of carotenoids. Catalyzes the condensation of two molecules of geranylgeranyl diphosphate (GGPP) to give prephytoene diphosphate (PPPP) and the subsequent rearrangement of the cyclopropylcarbinyl intermediate to yield phytoene. The sequence is that of Phytoene synthase (crtB) from Rhodobacter capsulatus (strain ATCC BAA-309 / NBRC 16581 / SB1003).